We begin with the raw amino-acid sequence, 457 residues long: 4-hydroxybenzoate transporter PcaK (457 aa).

Residues 1–34 (MPKEANMASQDYATQRSSLDAQALINDAPLSRYQ) lie on the Cytoplasmic side of the membrane. A helical membrane pass occupies residues 35–55 (WLIAIVCFLIVFVDGIDTAAM). The Periplasmic segment spans residues 56-72 (GFIAPALAQDWGVDRSQ). A helical transmembrane segment spans residues 73–93 (LGPVMSAALGGMIIGALVSGP). The Cytoplasmic segment spans residues 94 to 101 (TADRFGRK). A helical membrane pass occupies residues 102–122 (IVLSMSMLVFGGFTLACAYST). The Periplasmic segment spans residues 123-128 (NLDSLV). A helical membrane pass occupies residues 129-149 (IFRFLTGIGLGAAMPNATTLF). Over 150 to 168 (SEYCPARIRSLLVTCMFCG) the chain is Cytoplasmic. A helical transmembrane segment spans residues 169 to 189 (YNLGMAIGGFISSWLIPAFGW). Residues 190-191 (HS) are Periplasmic-facing. A helical transmembrane segment spans residues 192 to 212 (LFLLGGWAPLILMLLVIFFLP). At 213–274 (ESYRFLIVKG…LFSAKYVKGT (62 aa)) the chain is on the cytoplasmic side. Residues 275–295 (VLLWVTYFMGLVMIYLLTSWL) traverse the membrane as a helical segment. The Periplasmic segment spans residues 296 to 310 (PTLMRETGASLERAA). The chain crosses the membrane as a helical span at residues 311 to 331 (FLGGLFQFGGVLSALFIGWAM). The Cytoplasmic portion of the chain corresponds to 332-338 (DRFNPNR). Residues 339-359 (IIAGFYLAAGIFAVIVGQSLS) traverse the membrane as a helical segment. At 360-363 (NPTL) the chain is on the periplasmic side. The helical transmembrane segment at 364–384 (LALFILCAGIAVNGAQSSMPV) threads the bilayer. Topologically, residues 385 to 400 (LSARFYPTQCRATGVA) are cytoplasmic. The chain crosses the membrane as a helical span at residues 401 to 421 (WMSGIGRFGAVFGAWIGAVLL). Over 422–426 (GNNWS) the chain is Periplasmic. Residues 427–447 (FTMILSMLIIPAAAAAIAIFV) form a helical membrane-spanning segment. The Cytoplasmic segment spans residues 448 to 457 (KSLVAHTDAT).

The protein belongs to the major facilitator superfamily. Aromatic acid:H(+) symporter (AAHS) (TC 2.A.1.15) family. In terms of assembly, homotrimer.

The protein resides in the cell inner membrane. Its function is as follows. Uptake of 4-hydroxybenzoate (4-HB). Can also transport a variety of aromatic acids with hydroxyl substitutions at the 2-, 3- and 4-positions, such as salicylate, 2,4-dihydroxybenzoate, protocatechuate, 3-hydroxybenzoate, vanillate and gentisate. In Acinetobacter baylyi (strain ATCC 33305 / BD413 / ADP1), this protein is 4-hydroxybenzoate transporter PcaK.